A 224-amino-acid polypeptide reads, in one-letter code: Uridylate kinase (224 aa).

8 to 12 is an ATP binding site; it reads KITGK. Residue Gly43 participates in UMP binding. Residues Gly44 and Arg48 each contribute to the ATP site. UMP contacts are provided by residues Asp66 and 114–120; that span reads LIPGQST. 3 residues coordinate ATP: Ser140, Tyr146, and Asp149.

It belongs to the UMP kinase family. As to quaternary structure, homohexamer.

It localises to the cytoplasm. The enzyme catalyses UMP + ATP = UDP + ADP. The protein operates within pyrimidine metabolism; CTP biosynthesis via de novo pathway; UDP from UMP (UMPK route): step 1/1. Inhibited by UTP. Catalyzes the reversible phosphorylation of UMP to UDP. The polypeptide is Uridylate kinase (Staphylothermus marinus (strain ATCC 43588 / DSM 3639 / JCM 9404 / F1)).